The chain runs to 139 residues: Peptide methionine sulfoxide reductase MsrB (139 aa).

A MsrB domain is found at 8–130 (DREWQRELSP…NSASLQLKTQ (123 aa)). Zn(2+)-binding residues include cysteine 47, cysteine 50, cysteine 96, and cysteine 99. Cysteine 119 acts as the Nucleophile in catalysis.

This sequence belongs to the MsrB Met sulfoxide reductase family. Requires Zn(2+) as cofactor.

The catalysed reaction is L-methionyl-[protein] + [thioredoxin]-disulfide + H2O = L-methionyl-(R)-S-oxide-[protein] + [thioredoxin]-dithiol. The chain is Peptide methionine sulfoxide reductase MsrB from Acinetobacter baumannii (strain AB307-0294).